Reading from the N-terminus, the 207-residue chain is Probable molybdenum cofactor guanylyltransferase (207 aa).

Residues 9–11, Lys-21, and Asp-97 each bind GTP; that span reads LAG. Position 97 (Asp-97) interacts with Mg(2+).

This sequence belongs to the MobA family. Mg(2+) serves as cofactor.

The protein resides in the cytoplasm. The enzyme catalyses Mo-molybdopterin + GTP + H(+) = Mo-molybdopterin guanine dinucleotide + diphosphate. Functionally, transfers a GMP moiety from GTP to Mo-molybdopterin (Mo-MPT) cofactor (Moco or molybdenum cofactor) to form Mo-molybdopterin guanine dinucleotide (Mo-MGD) cofactor. This Nostoc sp. (strain PCC 7120 / SAG 25.82 / UTEX 2576) protein is Probable molybdenum cofactor guanylyltransferase.